A 598-amino-acid polypeptide reads, in one-letter code: Elongation factor 4 (598 aa).

A tr-type G domain is found at 2 to 184 (TKIRNFSIIA…AVVDRIPPPS (183 aa)). Residues 14 to 19 (DHGKST) and 131 to 134 (NKID) contribute to the GTP site.

This sequence belongs to the TRAFAC class translation factor GTPase superfamily. Classic translation factor GTPase family. LepA subfamily.

Its subcellular location is the cell inner membrane. It catalyses the reaction GTP + H2O = GDP + phosphate + H(+). Its function is as follows. Required for accurate and efficient protein synthesis under certain stress conditions. May act as a fidelity factor of the translation reaction, by catalyzing a one-codon backward translocation of tRNAs on improperly translocated ribosomes. Back-translocation proceeds from a post-translocation (POST) complex to a pre-translocation (PRE) complex, thus giving elongation factor G a second chance to translocate the tRNAs correctly. Binds to ribosomes in a GTP-dependent manner. The chain is Elongation factor 4 from Syntrophobacter fumaroxidans (strain DSM 10017 / MPOB).